The sequence spans 100 residues: Integration host factor subunit alpha (100 aa).

A disordered region spans residues 53-72; that stretch reads FDLRDKKQRPGRNPKTGEEI.

The protein belongs to the bacterial histone-like protein family. As to quaternary structure, heterodimer of an alpha and a beta chain.

In terms of biological role, this protein is one of the two subunits of integration host factor, a specific DNA-binding protein that functions in genetic recombination as well as in transcriptional and translational control. The protein is Integration host factor subunit alpha of Marinobacter nauticus (strain ATCC 700491 / DSM 11845 / VT8) (Marinobacter aquaeolei).